The sequence spans 356 residues: Cobalt-precorrin-5B C(1)-methyltransferase (356 aa).

The protein belongs to the CbiD family.

The enzyme catalyses Co-precorrin-5B + S-adenosyl-L-methionine = Co-precorrin-6A + S-adenosyl-L-homocysteine. The protein operates within cofactor biosynthesis; adenosylcobalamin biosynthesis; cob(II)yrinate a,c-diamide from sirohydrochlorin (anaerobic route): step 6/10. In terms of biological role, catalyzes the methylation of C-1 in cobalt-precorrin-5B to form cobalt-precorrin-6A. This Citrifermentans bemidjiense (strain ATCC BAA-1014 / DSM 16622 / JCM 12645 / Bem) (Geobacter bemidjiensis) protein is Cobalt-precorrin-5B C(1)-methyltransferase.